Consider the following 248-residue polypeptide: MALLEICCYSMECALTAQRNGADRIELCAAPKEGGLTPSLGVLRSVREHITIPVHPIIRPRGGDFYYTDGEFAAMLEDIRLVRELGFPGLVTGVLTVDGDVDMSRMEKIMTAAGPLAVTFHRAFDMCANPFNALKNLADAGVARVLTSGQKADAAQGLSIIMELIAQGDAPIIMAGAGVRANNLQNFLDAGVREVHSSAGVLLPSPMRYRNQGLSMSADIQADEYSRYRVEGAAVAEMKGIIVRHQAK.

Belongs to the CutC family. Homodimer.

It is found in the cytoplasm. This Salmonella paratyphi B (strain ATCC BAA-1250 / SPB7) protein is PF03932 family protein CutC.